Here is an 87-residue protein sequence, read N- to C-terminus: Acyl-CoA-binding protein (87 aa).

In terms of domain architecture, ACB spans 2-87 (VSQLFEEKAK…VDQLIAKYSS (86 aa)). An acyl-CoA contacts are provided by residues 29–33 (YALYK), lysine 51, and lysine 55. Lysine 51 is covalently cross-linked (Glycyl lysine isopeptide (Lys-Gly) (interchain with G-Cter in ubiquitin)). A Glycyl lysine isopeptide (Lys-Gly) (interchain with G-Cter in ubiquitin) cross-link involves residue lysine 72. Residue tyrosine 74 participates in an acyl-CoA binding.

The protein belongs to the ACBP family.

Its function is as follows. Binds medium- and long-chain acyl-CoA esters with very high affinity and may function as an intracellular carrier of acyl-CoA esters. Enhances the in vitro activity of the ceramide synthase complex. The sequence is that of Acyl-CoA-binding protein (ACB1) from Saccharomyces cerevisiae (strain ATCC 204508 / S288c) (Baker's yeast).